The primary structure comprises 391 residues: Glutamate 5-kinase (391 aa).

ATP is bound at residue Lys-17. The substrate site is built by Ser-57, Asp-144, and Asn-156. ATP is bound by residues 176-177 and 216-222; these read SD and TGGMTTK. In terms of domain architecture, PUA spans 278 to 356; sequence QGQIVIDDGA…AWLAAEMGPA (79 aa). Residues 370 to 391 are disordered; the sequence is SRRRKAEPSSRNQKSSGSRVTS. Residues 378 to 391 show a composition bias toward polar residues; it reads SSRNQKSSGSRVTS.

This sequence belongs to the glutamate 5-kinase family.

It localises to the cytoplasm. It catalyses the reaction L-glutamate + ATP = L-glutamyl 5-phosphate + ADP. It functions in the pathway amino-acid biosynthesis; L-proline biosynthesis; L-glutamate 5-semialdehyde from L-glutamate: step 1/2. Its function is as follows. Catalyzes the transfer of a phosphate group to glutamate to form L-glutamate 5-phosphate. This Cutibacterium acnes (strain DSM 16379 / KPA171202) (Propionibacterium acnes) protein is Glutamate 5-kinase.